Here is a 220-residue protein sequence, read N- to C-terminus: Deep-sea actinoporin Cjtox I (220 aa).

An N-terminal signal peptide occupies residues 1–19 (MNRLIILCLVAATIYSTIA). Positions 20–42 (LPMKEDISNEERPTSVNEKPVKK) are excised as a propeptide. Ser96, Val128, Ser146, Pro148, Tyr174, Tyr178, and Tyr179 together coordinate phosphocholine. The interval 146-161 (SVPYDYNWYSNWWNIK) is trp-rich region, which is important for the binding to lipid membrane. The Cell attachment site, crucial for protein stability motif lies at 185-187 (KGN).

This sequence belongs to the actinoporin family. Sea anemone subfamily. As to quaternary structure, octamer or nonamer in membranes. Monomer in the soluble state. In terms of tissue distribution, expressed in tentacles.

It localises to the secreted. It is found in the nematocyst. The protein localises to the target cell membrane. In terms of biological role, probably acts in predation. Pore-forming protein that forms cations-selective hydrophilic pores of around 1 nm and causes cytolysis. Pore formation is a multi-step process that involves specific recognition of membrane sphingomyelin (but neither cholesterol nor phosphatidylcholine) using aromatic rich region and adjacent phosphocholine (POC) binding site, firm binding to the membrane (mainly driven by hydrophobic interactions) accompanied by the transfer of the N-terminal region to the lipid-water interface and finally pore formation after oligomerization of monomers. Shows hemolytic activity on equine erythrocytes. Hemolysis is moderately inhibited in presence of sphingomyelin, suggesting that this protein targets sphingomyelin. The protein is Deep-sea actinoporin Cjtox I of Cribrinopsis japonica (Deep-sea anemone).